A 454-amino-acid chain; its full sequence is uncharacterized protein (454 aa).

An HNH domain is found at 364–405 (CSRPGCDAPAYHSEVHHVTPWTTTHRTDINDLTLACGPDNRL).

The protein belongs to the Rv1128c/1148c/1588c/1702c/1945/3466 family.

This is an uncharacterized protein from Mycobacterium tuberculosis (strain CDC 1551 / Oshkosh).